We begin with the raw amino-acid sequence, 212 residues long: MSVGILGTKLGMTQIFDKETGIAIPVTVIHAGPCPITQVKTPATDGYNSIQIGYGEVKEKALNKPKLGHLKKSASTPVRHLKEYRLENAADYQLGDGIKVDLFKPGDLVDVAGKTIGRGFAGYQKRHNFKRGSMTHGSKNHRLPGSTGAGTTPGRVYPGKRMAGRYGGTQVTIRKLTVVQIDTERNLILIKGAVPGKPGNLLSITPAKTVGK.

A disordered region spans residues 130 to 158 (KRGSMTHGSKNHRLPGSTGAGTTPGRVYP).

It belongs to the universal ribosomal protein uL3 family. In terms of assembly, part of the 50S ribosomal subunit. Forms a cluster with proteins L14 and L19.

Functionally, one of the primary rRNA binding proteins, it binds directly near the 3'-end of the 23S rRNA, where it nucleates assembly of the 50S subunit. The sequence is that of Large ribosomal subunit protein uL3 from Gloeothece citriformis (strain PCC 7424) (Cyanothece sp. (strain PCC 7424)).